The chain runs to 309 residues: Probable lipid kinase YegS-like (309 aa).

The DAGKc domain occupies 1–134 (MAPSHWRLIL…IDLLRIDADH (134 aa)). Residues Thr-39, 65–71 (GDGTLSE), and Thr-96 each bind ATP. Mg(2+)-binding residues include Leu-219, Asp-222, and Leu-224. Glu-280 acts as the Proton acceptor in catalysis.

It belongs to the diacylglycerol/lipid kinase family. YegS lipid kinase subfamily. Requires Mg(2+) as cofactor. The cofactor is Ca(2+).

The protein localises to the cytoplasm. Probably phosphorylates lipids; the in vivo substrate is unknown. The sequence is that of Probable lipid kinase YegS-like from Xanthomonas campestris pv. campestris (strain 8004).